The chain runs to 258 residues: Aspartate/glutamate leucyltransferase (258 aa).

The protein belongs to the R-transferase family. Bpt subfamily.

Its subcellular location is the cytoplasm. The catalysed reaction is N-terminal L-glutamyl-[protein] + L-leucyl-tRNA(Leu) = N-terminal L-leucyl-L-glutamyl-[protein] + tRNA(Leu) + H(+). The enzyme catalyses N-terminal L-aspartyl-[protein] + L-leucyl-tRNA(Leu) = N-terminal L-leucyl-L-aspartyl-[protein] + tRNA(Leu) + H(+). Functions in the N-end rule pathway of protein degradation where it conjugates Leu from its aminoacyl-tRNA to the N-termini of proteins containing an N-terminal aspartate or glutamate. This chain is Aspartate/glutamate leucyltransferase, found in Rhodopseudomonas palustris (strain TIE-1).